Here is a 70-residue protein sequence, read N- to C-terminus: uncharacterized protein (70 aa).

This is an uncharacterized protein from Rickettsia conorii (strain ATCC VR-613 / Malish 7).